The chain runs to 170 residues: Adenine phosphoribosyltransferase (170 aa).

Belongs to the purine/pyrimidine phosphoribosyltransferase family. In terms of assembly, homodimer.

Its subcellular location is the cytoplasm. It carries out the reaction AMP + diphosphate = 5-phospho-alpha-D-ribose 1-diphosphate + adenine. Its pathway is purine metabolism; AMP biosynthesis via salvage pathway; AMP from adenine: step 1/1. Its function is as follows. Catalyzes a salvage reaction resulting in the formation of AMP, that is energically less costly than de novo synthesis. In Acaryochloris marina (strain MBIC 11017), this protein is Adenine phosphoribosyltransferase.